The chain runs to 215 residues: 3-demethoxyubiquinol 3-hydroxylase (215 aa).

The Fe cation site is built by glutamate 64, glutamate 94, histidine 97, glutamate 146, glutamate 178, and histidine 181.

The protein belongs to the COQ7 family. Requires Fe cation as cofactor.

It is found in the cell membrane. The catalysed reaction is a 5-methoxy-2-methyl-3-(all-trans-polyprenyl)benzene-1,4-diol + AH2 + O2 = a 3-demethylubiquinol + A + H2O. The protein operates within cofactor biosynthesis; ubiquinone biosynthesis. Functionally, catalyzes the hydroxylation of 2-nonaprenyl-3-methyl-6-methoxy-1,4-benzoquinol during ubiquinone biosynthesis. This chain is 3-demethoxyubiquinol 3-hydroxylase, found in Pseudomonas fluorescens (strain ATCC BAA-477 / NRRL B-23932 / Pf-5).